The chain runs to 328 residues: PLASTID TRANSCRIPTIONALLY ACTIVE protein 6, chloroplastic (328 aa).

The segment covering 1–14 has biased composition (low complexity); it reads MASSAASPSLSLLS. Positions 1-21 are disordered; the sequence is MASSAASPSLSLLSFTSKPPY. The transit peptide at 1 to 59 directs the protein to the chloroplast; sequence MASSAASPSLSLLSFTSKPPYPSGSQRLFASFRTDGLFAPLTLKSRRGRGIVVKVDDVD. The short motif at 267–275 is the Nuclear localization signal element; sequence RKRDRKDDL. An RNA binding domain motif is present at residues 301–319; that stretch reads EREEWTKTREDMEKHLRKL.

In terms of assembly, subunit of the plastid-encoded RNA polymerase (PEP) complex. Component of a large nuclear subcomplex that may include other PEP subunits (e.g. PTAC12/HMR/PAP5, PTAC14/PAP7 and PTAC7/PAP12). Binds directly to PTAC12/HMR/PAP5 in the nucleus. Interacts with MTERF5. Mostly expressed in rosette leaves, stems and flowers, and, to a lower extent, in roots and cauline leaves.

Its subcellular location is the plastid. It is found in the chloroplast. It localises to the chloroplast thylakoid. The protein localises to the nucleus. The protein resides in the nucleoplasm. In terms of biological role, essential protein involved in plastid gene expression and in chloroplast biogenesis. Links photomorphogenesis and chloroplast biogenesis through its dual localization; required for the formation of late photobodies in the nucleus, as well as for phytochrome B-mediated signaling cascade and subsequent reshaping of the plastid-encoded RNA polymerase (PEP) activity. Binds RNA via specific recognition motifs of viral origin. Recruited by MTERF5 to the transcriptionally paused region of psbEFLJ. Promotes leaf greening. The chain is PLASTID TRANSCRIPTIONALLY ACTIVE protein 6, chloroplastic from Arabidopsis thaliana (Mouse-ear cress).